A 444-amino-acid polypeptide reads, in one-letter code: Vacuolar protein sorting-associated protein 4B (444 aa).

The MIT domain occupies 4-82 (TSPNLQKAID…KEYLKNKEKK (79 aa)). Positions 19–82 (AQEDKAGNYE…KEYLKNKEKK (64 aa)) form a coiled coil. Residues 78–88 (NKEKKAQKPVK) are compositionally biased toward basic and acidic residues. Residues 78–117 (NKEKKAQKPVKEGQPSPADEKGNDSDGEGESDDPEKKKLQ) form a disordered region. 3 positions are modified to phosphoserine: Ser93, Ser102, and Ser108. 174-181 (GPPGTGKS) contributes to the ATP binding site. Ser410 is modified (phosphoserine).

Belongs to the AAA ATPase family. In terms of assembly, proposed to be monomeric or homodimeric in nucleotide-free form and to oligomerize upon binding to ATP to form two stacked hexameric or heptameric rings with a central pore through which ESCRT-III substrates are translocated in an ATP-dependent manner. In vitro, associates on the inside of a helical tubular structure formed by a CHMP2A-CHMP3 polymer. Interacts with CHMP1A, CHMP1B, CHMP2A, CHMP4B and CHMP6. Interacts with VPS4A; the interaction suggests a heteromeric assembly with VPS4A. Interacts with VTA1.

The protein localises to the late endosome membrane. The enzyme catalyses ATP + H2O = ADP + phosphate + H(+). Its function is as follows. Involved in late steps of the endosomal multivesicular bodies (MVB) pathway. Recognizes membrane-associated ESCRT-III assemblies and catalyzes their disassembly, possibly in combination with membrane fission. Redistributes the ESCRT-III components to the cytoplasm for further rounds of MVB sorting. MVBs contain intraluminal vesicles (ILVs) that are generated by invagination and scission from the limiting membrane of the endosome and mostly are delivered to lysosomes enabling degradation of membrane proteins, such as stimulated growth factor receptors, lysosomal enzymes and lipids. VPS4A/B are required for the exosomal release of SDCBP, CD63 and syndecan. In terms of biological role, (Microbial infection) In conjunction with the ESCRT machinery also appears to function in topologically equivalent membrane fission events, such as the terminal stages of cytokinesis and enveloped virus budding (lentiviruses). This Pongo abelii (Sumatran orangutan) protein is Vacuolar protein sorting-associated protein 4B (VPS4B).